The following is a 400-amino-acid chain: Argininosuccinate synthase (400 aa).

ATP is bound at residue 9–17 (AYSGGLDTS). Y87 contacts L-citrulline. G117 provides a ligand contact to ATP. 3 residues coordinate L-aspartate: T119, N123, and D124. L-citrulline is bound at residue N123. Residues R127, S176, S185, E261, and Y273 each coordinate L-citrulline.

It belongs to the argininosuccinate synthase family. Type 1 subfamily. In terms of assembly, homotetramer.

The protein resides in the cytoplasm. It carries out the reaction L-citrulline + L-aspartate + ATP = 2-(N(omega)-L-arginino)succinate + AMP + diphosphate + H(+). The protein operates within amino-acid biosynthesis; L-arginine biosynthesis; L-arginine from L-ornithine and carbamoyl phosphate: step 2/3. The chain is Argininosuccinate synthase from Chlorobium phaeobacteroides (strain DSM 266 / SMG 266 / 2430).